Consider the following 64-residue polypeptide: Large ribosomal subunit protein uL29 (64 aa).

This sequence belongs to the universal ribosomal protein uL29 family.

This is Large ribosomal subunit protein uL29 from Teredinibacter turnerae (strain ATCC 39867 / T7901).